The sequence spans 1152 residues: Syntaxin-binding protein 5 (1152 aa).

The tract at residues 14-35 (TAGSSSASQQQQQQQHPPGNRE) is disordered. The span at 17–28 (SSSASQQQQQQQ) shows a compositional bias: low complexity. WD repeat units follow at residues 62-95 (SALA…CYCQ), 102-141 (VIQL…SLKF), 146-182 (VTFC…GYVI), 201-235 (HISD…DYRY), 241-273 (IHSV…PTKP), 295-337 (PILK…KSTA), 345-379 (IVDF…LIDL), 401-478 (TCCE…YKLK), 506-620 (QIIS…ELVI), and 634-696 (TSLA…SGAG). Disordered stretches follow at residues 557-596 (TPEG…GLRD) and 675-731 (SNDP…QKVN). Ser693 carries the post-translational modification Phosphoserine. A compositionally biased stretch (low complexity) spans 713-722 (SPTSGSSSPH). At Ser724 the chain carries Phosphoserine; by PKA. At Ser760 the chain carries Phosphoserine. The residue at position 763 (Thr763) is a Phosphothreonine. Ser783 is modified (phosphoserine). Thr785 bears the Phosphothreonine mark. Ser786 bears the Phosphoserine mark. WD repeat units lie at residues 795–852 (ISAL…SGTI), 861–935 (RMAF…QNCA), 940–984 (ITET…LDVY), and 998–1021 (CFAN…TYSQ). Positions 879 to 893 (WTEHNVPEEKDEKEK) are enriched in basic and acidic residues. Positions 879-907 (WTEHNVPEEKDEKEKLKKRRPVSVSPSSS) are disordered. Ser901 and Ser903 each carry phosphoserine. Thr1040 carries the post-translational modification Phosphothreonine. Phosphoserine occurs at positions 1059 and 1132. The v-SNARE coiled-coil homology domain maps to 1087-1147 (GIEGVKGAAS…HEMMLKYKDK (61 aa)).

The protein belongs to the WD repeat L(2)GL family. In terms of assembly, part of a complex that contains STXBP5, STX4A and SNAP23. Interacts with STX1A and STX4A via its v-SNARE homology domain. Part of a complex that contains STX1, STXBP5, SNAP25 and SYT1. Post-translationally, phosphorylation by PKA reduces interaction with STX1A and enhances synaptic neurotransmitter release. As to expression, isoform 1 is detected in heart, brain, lung, liver, skeletal muscle, kidney and testis. Isoform 2 is detected in brain and in testis. Isoform 3 is detected in testis.

Its subcellular location is the cytoplasm. It localises to the cell membrane. The protein resides in the cytoplasmic vesicle membrane. The protein localises to the synapse. It is found in the cytoplasmic vesicle. Its subcellular location is the secretory vesicle. It localises to the synaptic vesicle. Functionally, inhibits translocation of GLUT4 from intracellular vesicles to the plasma membrane. Plays a regulatory role in calcium-dependent exocytosis and neurotransmitter release. Inhibits membrane fusion between transport vesicles and the plasma membrane. May modulate the assembly of trans-SNARE complexes between transport vesicles and the plasma membrane. Competes with STXBP1 for STX1 binding. The protein is Syntaxin-binding protein 5 (Stxbp5) of Rattus norvegicus (Rat).